The following is a 239-amino-acid chain: tRNA (guanine-N(7)-)-methyltransferase (239 aa).

S-adenosyl-L-methionine contacts are provided by glutamate 68, glutamate 93, aspartate 120, and aspartate 143. Aspartate 143 is an active-site residue. Substrate is bound by residues lysine 147, aspartate 180, and 217–220 (TKFE).

The protein belongs to the class I-like SAM-binding methyltransferase superfamily. TrmB family.

It carries out the reaction guanosine(46) in tRNA + S-adenosyl-L-methionine = N(7)-methylguanosine(46) in tRNA + S-adenosyl-L-homocysteine. The protein operates within tRNA modification; N(7)-methylguanine-tRNA biosynthesis. Catalyzes the formation of N(7)-methylguanine at position 46 (m7G46) in tRNA. The sequence is that of tRNA (guanine-N(7)-)-methyltransferase from Vibrio parahaemolyticus serotype O3:K6 (strain RIMD 2210633).